A 301-amino-acid chain; its full sequence is Putative S-adenosyl-L-methionine-dependent methyltransferase BCG_0775c (301 aa).

Residues Asp130 and 159 to 160 (DL) contribute to the S-adenosyl-L-methionine site.

Belongs to the UPF0677 family.

Exhibits S-adenosyl-L-methionine-dependent methyltransferase activity. The polypeptide is Putative S-adenosyl-L-methionine-dependent methyltransferase BCG_0775c (Mycobacterium bovis (strain BCG / Pasteur 1173P2)).